The chain runs to 74 residues: uncharacterized protein (74 aa).

This is an uncharacterized protein from Archaeoglobus fulgidus (strain ATCC 49558 / DSM 4304 / JCM 9628 / NBRC 100126 / VC-16).